A 526-amino-acid chain; its full sequence is Probable lipid II flippase MurJ (526 aa).

14 helical membrane passes run 35–55 (LMGTSATADAFTVAFMIPNLF), 58–78 (LFAENAISVAFIPVFTQHYSM), 96–116 (AIFTLMSSVTASISLIGILGA), 137–157 (MFPYLWMISLAAFFQGMLHSI), 160–180 (FVPSGCTPIFFNVSVIFSMYF), 190–210 (IAAAIGVLIGGCAQALFQLIF), 235–255 (IIALLLPTTVGIATYLLNDLV), 281–301 (LLGIFIVSLSSVVLPDLSFHV), 313–333 (LITAIKIVMLITIPATFFVLF), 362–382 (WHSVGMLAIALNRVLISAFYA), 391–411 (IAGTISFVTNIILATLLFIPL), 415–435 (GIAFSLSAASMVQTVFLWMFL), 459–479 (LFSVIALVPTWASSFFTAYFF), and 489–509 (GVPLCVEALIFSCTGCILLLL).

Belongs to the MurJ/MviN family.

Its subcellular location is the cell inner membrane. Its pathway is cell wall biogenesis; peptidoglycan biosynthesis. Involved in peptidoglycan biosynthesis. Transports lipid-linked peptidoglycan precursors from the inner to the outer leaflet of the cytoplasmic membrane. This Treponema pallidum (strain Nichols) protein is Probable lipid II flippase MurJ.